The primary structure comprises 160 residues: Large ribosomal subunit protein uL16 (160 aa).

The segment covering Lys-138–Thr-148 has biased composition (polar residues). The disordered stretch occupies residues Lys-138–Gln-160. Residues Lys-149–Gln-160 show a composition bias toward basic and acidic residues.

This sequence belongs to the universal ribosomal protein uL16 family. In terms of assembly, part of the 50S ribosomal subunit.

In terms of biological role, binds 23S rRNA and is also seen to make contacts with the A and possibly P site tRNAs. This Prochlorococcus marinus (strain MIT 9312) protein is Large ribosomal subunit protein uL16.